A 163-amino-acid polypeptide reads, in one-letter code: MEQKEPMTQYGYEKIQKEFEALKEERPKVVEEIERAKEHGDLRENAEYHAAKERLAFIDARLTELSDLLARAQVIDPSKLPHDKVGFGSTVKLLDIEEEEEIEYTIVGSTESNPEHGLISYNTPLARQLIGKEEGDEITVKLPKGEIDFEVLEVYYKPIKFEE.

The stretch at 12 to 73 forms a coiled coil; the sequence is YEKIQKEFEA…ELSDLLARAQ (62 aa).

Belongs to the GreA/GreB family.

In terms of biological role, necessary for efficient RNA polymerase transcription elongation past template-encoded arresting sites. The arresting sites in DNA have the property of trapping a certain fraction of elongating RNA polymerases that pass through, resulting in locked ternary complexes. Cleavage of the nascent transcript by cleavage factors such as GreA or GreB allows the resumption of elongation from the new 3'terminus. GreA releases sequences of 2 to 3 nucleotides. The protein is Transcription elongation factor GreA of Nitratiruptor sp. (strain SB155-2).